A 135-amino-acid chain; its full sequence is 6,7-dimethyl-8-ribityllumazine synthase (135 aa).

Residues Phe-12, 44 to 46 (AYD), and 68 to 70 (CVI) contribute to the 5-amino-6-(D-ribitylamino)uracil site. 73–74 (AT) is a (2S)-2-hydroxy-3-oxobutyl phosphate binding site. The active-site Proton donor is His-76. Residue Leu-101 participates in 5-amino-6-(D-ribitylamino)uracil binding. Residue Arg-116 coordinates (2S)-2-hydroxy-3-oxobutyl phosphate.

This sequence belongs to the DMRL synthase family.

The enzyme catalyses (2S)-2-hydroxy-3-oxobutyl phosphate + 5-amino-6-(D-ribitylamino)uracil = 6,7-dimethyl-8-(1-D-ribityl)lumazine + phosphate + 2 H2O + H(+). It participates in cofactor biosynthesis; riboflavin biosynthesis; riboflavin from 2-hydroxy-3-oxobutyl phosphate and 5-amino-6-(D-ribitylamino)uracil: step 1/2. Its function is as follows. Catalyzes the formation of 6,7-dimethyl-8-ribityllumazine by condensation of 5-amino-6-(D-ribitylamino)uracil with 3,4-dihydroxy-2-butanone 4-phosphate. This is the penultimate step in the biosynthesis of riboflavin. This Methanoculleus marisnigri (strain ATCC 35101 / DSM 1498 / JR1) protein is 6,7-dimethyl-8-ribityllumazine synthase.